Reading from the N-terminus, the 430-residue chain is Anaerobic glycerol-3-phosphate dehydrogenase subunit B (430 aa).

This sequence belongs to the anaerobic G-3-P dehydrogenase subunit B family. In terms of assembly, composed of a catalytic GlpA/B dimer and of membrane bound GlpC. FMN is required as a cofactor.

It catalyses the reaction a quinone + sn-glycerol 3-phosphate = dihydroxyacetone phosphate + a quinol. The protein operates within polyol metabolism; glycerol degradation via glycerol kinase pathway; glycerone phosphate from sn-glycerol 3-phosphate (anaerobic route): step 1/1. In terms of biological role, conversion of glycerol 3-phosphate to dihydroxyacetone. Uses fumarate or nitrate as electron acceptor. This chain is Anaerobic glycerol-3-phosphate dehydrogenase subunit B, found in Actinobacillus succinogenes (strain ATCC 55618 / DSM 22257 / CCUG 43843 / 130Z).